A 524-amino-acid polypeptide reads, in one-letter code: Cytochrome P450 1A1 (524 aa).

The interval 33–44 (LRTQVPKGLKTP) is mitochondrial targeting signal. O-linked (GlcNAc) serine glycosylation is present at Ser-71. Phe-228 lines the substrate pocket. Cys-461 contacts heme.

Belongs to the cytochrome P450 family. In terms of assembly, interacts with cytosolic chaperones HSP70 and HSP90; this interaction is required for initial targeting to mitochondria. Interacts (via mitochondrial targeting signal) with TOMM40 (via N-terminus); this interaction is required for translocation across the mitochondrial outer membrane. It depends on heme as a cofactor.

It localises to the endoplasmic reticulum membrane. The protein resides in the mitochondrion inner membrane. The protein localises to the microsome membrane. Its subcellular location is the cytoplasm. It catalyses the reaction an organic molecule + reduced [NADPH--hemoprotein reductase] + O2 = an alcohol + oxidized [NADPH--hemoprotein reductase] + H2O + H(+). It carries out the reaction estrone + reduced [NADPH--hemoprotein reductase] + O2 = 2-hydroxyestrone + oxidized [NADPH--hemoprotein reductase] + H2O + H(+). The catalysed reaction is estrone + reduced [NADPH--hemoprotein reductase] + O2 = 4-hydroxyestrone + oxidized [NADPH--hemoprotein reductase] + H2O + H(+). The enzyme catalyses estrone + reduced [NADPH--hemoprotein reductase] + O2 = 6alpha-hydroxyestrone + oxidized [NADPH--hemoprotein reductase] + H2O + H(+). It catalyses the reaction estrone + reduced [NADPH--hemoprotein reductase] + O2 = 15alpha-hydroxyestrone + oxidized [NADPH--hemoprotein reductase] + H2O + H(+). It carries out the reaction estrone + reduced [NADPH--hemoprotein reductase] + O2 = 16alpha-hydroxyestrone + oxidized [NADPH--hemoprotein reductase] + H2O + H(+). The catalysed reaction is 17beta-estradiol + reduced [NADPH--hemoprotein reductase] + O2 = 2-hydroxy-17beta-estradiol + oxidized [NADPH--hemoprotein reductase] + H2O + H(+). The enzyme catalyses 17beta-estradiol + reduced [NADPH--hemoprotein reductase] + O2 = 4-hydroxy-17beta-estradiol + oxidized [NADPH--hemoprotein reductase] + H2O + H(+). It catalyses the reaction 17beta-estradiol + reduced [NADPH--hemoprotein reductase] + O2 = 6alpha-hydroxy-17beta-estradiol + oxidized [NADPH--hemoprotein reductase] + H2O + H(+). It carries out the reaction 17beta-estradiol + reduced [NADPH--hemoprotein reductase] + O2 = 7alpha-hydroxy-17beta-estradiol + oxidized [NADPH--hemoprotein reductase] + H2O + H(+). The catalysed reaction is 17beta-estradiol + reduced [NADPH--hemoprotein reductase] + O2 = 15alpha-hydroxy-17beta-estradiol + oxidized [NADPH--hemoprotein reductase] + H2O + H(+). The enzyme catalyses (5Z,8Z,11Z)-eicosatrienoate + reduced [NADPH--hemoprotein reductase] + O2 = 19-hydroxy-(5Z,8Z,11Z)-eicosatrienoate + oxidized [NADPH--hemoprotein reductase] + H2O + H(+). It catalyses the reaction (5Z,8Z,11Z,14Z)-eicosatetraenoate + reduced [NADPH--hemoprotein reductase] + O2 = 16-hydroxy-(5Z,8Z,11Z,14Z)-eicosatetraenoate + oxidized [NADPH--hemoprotein reductase] + H2O + H(+). It carries out the reaction (5Z,8Z,11Z,14Z)-eicosatetraenoate + reduced [NADPH--hemoprotein reductase] + O2 = 17-hydroxy-(5Z,8Z,11Z,14Z)-eicosatetraenoate + oxidized [NADPH--hemoprotein reductase] + H2O + H(+). The catalysed reaction is (5Z,8Z,11Z,14Z)-eicosatetraenoate + reduced [NADPH--hemoprotein reductase] + O2 = 18-hydroxy-(5Z,8Z,11Z,14Z)-eicosatetraenoate + oxidized [NADPH--hemoprotein reductase] + H2O + H(+). The enzyme catalyses (5Z,8Z,11Z,14Z)-eicosatetraenoate + reduced [NADPH--hemoprotein reductase] + O2 = 19-hydroxy-(5Z,8Z,11Z,14Z)-eicosatetraenoate + oxidized [NADPH--hemoprotein reductase] + H2O + H(+). It catalyses the reaction (5Z,8Z,11Z,14Z,17Z)-eicosapentaenoate + reduced [NADPH--hemoprotein reductase] + O2 = 19-hydroxy-(5Z,8Z,11Z,14Z,17Z)-eicosapentaenoate + oxidized [NADPH--hemoprotein reductase] + H2O + H(+). It carries out the reaction (5Z,8Z,11Z,14Z)-eicosatetraenoate + reduced [NADPH--hemoprotein reductase] + O2 = (8R,9S)-epoxy-(5Z,11Z,14Z)-eicosatrienoate + oxidized [NADPH--hemoprotein reductase] + H2O + H(+). The catalysed reaction is (5Z,8Z,11Z,14Z)-eicosatetraenoate + reduced [NADPH--hemoprotein reductase] + O2 = (11R,12S)-epoxy-(5Z,8Z,14Z)-eicosatrienoate + oxidized [NADPH--hemoprotein reductase] + H2O + H(+). The enzyme catalyses (5Z,8Z,11Z,14Z)-eicosatetraenoate + reduced [NADPH--hemoprotein reductase] + O2 = (14S,15R)-epoxy-(5Z,8Z,11Z)-eicosatrienoate + oxidized [NADPH--hemoprotein reductase] + H2O + H(+). It catalyses the reaction (5Z,8Z,11Z,14Z)-eicosatetraenoate + reduced [NADPH--hemoprotein reductase] + O2 = (14R,15S)-epoxy-(5Z,8Z,11Z)-eicosatrienoate + oxidized [NADPH--hemoprotein reductase] + H2O + H(+). It carries out the reaction (5Z,8Z,11Z,14Z,17Z)-eicosapentaenoate + reduced [NADPH--hemoprotein reductase] + O2 = (17R,18S)-epoxy-(5Z,8Z,11Z,14Z)-eicosatetraenoate + oxidized [NADPH--hemoprotein reductase] + H2O + H(+). The catalysed reaction is (4Z,7Z,10Z,13Z,16Z,19Z)-docosahexaenoate + reduced [NADPH--hemoprotein reductase] + O2 = (19S,20R)-epoxy-(4Z,7Z,10Z,13Z,16Z)-docosapentaenoate + oxidized [NADPH--hemoprotein reductase] + H2O + H(+). The enzyme catalyses (4Z,7Z,10Z,13Z,16Z,19Z)-docosahexaenoate + reduced [NADPH--hemoprotein reductase] + O2 = (19R,20S)-epoxy-(4Z,7Z,10Z,13Z,16Z)-docosapentaenoate + oxidized [NADPH--hemoprotein reductase] + H2O + H(+). It catalyses the reaction all-trans-retinol + reduced [NADPH--hemoprotein reductase] + O2 = all-trans-retinal + oxidized [NADPH--hemoprotein reductase] + 2 H2O + H(+). It carries out the reaction all-trans-retinal + reduced [NADPH--hemoprotein reductase] + O2 = all-trans-retinoate + oxidized [NADPH--hemoprotein reductase] + H2O + 2 H(+). The catalysed reaction is (13S)-hydroperoxy-(9Z,11E)-octadecadienoate = 13-oxo-(9Z,11E)-octadecadienoate + H2O. The enzyme catalyses (12S)-hydroperoxy-(5Z,8Z,10E,14Z)-eicosatetraenoate = 12-oxo-(5Z,8Z,10E,14Z)-eicosatetraenoate + H2O. It catalyses the reaction (15S)-hydroperoxy-(5Z,8Z,11Z,13E)-eicosatetraenoate = 15-oxo-(5Z,8Z,11Z,13E)-eicosatetraenoate + H2O. It carries out the reaction (5S)-hydroperoxy-(6E,8Z,11Z,14Z)-eicosatetraenoate = 5-oxo-(6E,8Z,11Z,14Z)-eicosatetraenoate + H2O. Its pathway is steroid hormone biosynthesis. It participates in lipid metabolism; fatty acid metabolism. It functions in the pathway cofactor metabolism; retinol metabolism. Functionally, a cytochrome P450 monooxygenase involved in the metabolism of various endogenous substrates, including fatty acids, steroid hormones and vitamins. Mechanistically, uses molecular oxygen inserting one oxygen atom into a substrate, and reducing the second into a water molecule, with two electrons provided by NADPH via cytochrome P450 reductase (CPR; NADPH-ferrihemoprotein reductase). Catalyzes the hydroxylation of carbon-hydrogen bonds. Exhibits high catalytic activity for the formation of hydroxyestrogens from estrone (E1) and 17beta-estradiol (E2), namely 2-hydroxy E1 and E2, as well as D-ring hydroxylated E1 and E2 at the C15alpha and C16alpha positions. Displays different regioselectivities for polyunsaturated fatty acids (PUFA) hydroxylation. Catalyzes the epoxidation of double bonds of certain PUFA. Converts arachidonic acid toward epoxyeicosatrienoic acid (EET) regioisomers, 8,9-, 11,12-, and 14,15-EET, that function as lipid mediators in the vascular system. Displays an absolute stereoselectivity in the epoxidation of eicosapentaenoic acid (EPA) producing the 17(R),18(S) enantiomer. May play an important role in all-trans retinoic acid biosynthesis in extrahepatic tissues. Catalyzes two successive oxidative transformation of all-trans retinol to all-trans retinal and then to the active form all-trans retinoic acid. May also participate in eicosanoids metabolism by converting hydroperoxide species into oxo metabolites (lipoxygenase-like reaction, NADPH-independent). In Mesocricetus auratus (Golden hamster), this protein is Cytochrome P450 1A1 (CYP1A1).